The following is a 327-amino-acid chain: rRNA 2'-O-methyltransferase fibrillarin (327 aa).

The interval 1–95 (MKPGFSPRGG…NQSGKNVMVE (95 aa)) is disordered. The span at 7-80 (PRGGGFGGRG…GGNRGRGGGR (74 aa)) shows a compositional bias: gly residues. Asymmetric dimethylarginine occurs at positions 8, 15, 21, 24, 28, and 31. Residues Lys-90, Lys-108, and Lys-115 each participate in a glycyl lysine isopeptide (Lys-Gly) (interchain with G-Cter in SUMO2) cross-link. Lys-108 is modified (N6-acetyllysine). The residue at position 122 (Ser-122) is a Phosphoserine. N6-acetyllysine is present on Lys-127. Phosphoserine is present on residues Ser-130 and Ser-132. Glycyl lysine isopeptide (Lys-Gly) (interchain with G-Cter in SUMO2) cross-links involve residues Lys-137, Lys-149, and Lys-164. S-adenosyl-L-methionine is bound by residues 178–179 (TT) and 197–198 (EF). 2 positions are modified to N6-acetyllysine: Lys-211 and Lys-212. S-adenosyl-L-methionine contacts are provided by residues 222–223 (DA) and 242–245 (DVAQ).

It belongs to the methyltransferase superfamily. Fibrillarin family. As to quaternary structure, component of box C/D small nucleolar ribonucleoprotein (snoRNP) particles that contain SNU13, FBL, NOP5 and NOP56, plus a guide RNA. It is associated with the U3, U8, U13, X and Y small nuclear RNAs. Component of several ribosomal and nucleolar protein complexes. Part of the small subunit (SSU) processome, composed of more than 70 proteins and the RNA chaperone small nucleolar RNA (snoRNA) U3. Interacts with PRMT5 and UTP20. Interacts with DDX5 and C1QBP. Interacts with NOL11. Interacts with PIH1D1. Interacts with RRP1B. Interacts with NOLC1. Interacts with SDE2. Interacts with NOP2 and NOP56. In terms of processing, by homology to other fibrillarins, some or all of the N-terminal domain arginines are modified to asymmetric dimethylarginine (DMA). Ubiquitinated. Ubiquitination leads to proteasomal degradation. Deubiquitinated by USP36. Post-translationally, acetylated by CREBBP/CBP, preventing methylation of 'Gln-105' of histone H2A (H2AQ104me), without affecting rRNA methylation. Deacetylation by SIRT7 restores methylation of 'Gln-105' of histone H2A (H2AQ104me).

It is found in the nucleus. It localises to the nucleolus. The protein localises to the nucleoplasm. It catalyses the reaction L-glutaminyl-[histone H2A] + S-adenosyl-L-methionine = N(5)-methyl-L-glutaminyl-[histone H2A] + S-adenosyl-L-homocysteine + H(+). The catalysed reaction is a ribonucleotide in rRNA + S-adenosyl-L-methionine = a 2'-O-methylribonucleotide in rRNA + S-adenosyl-L-homocysteine + H(+). The enzyme catalyses a ribonucleotide in U6 snRNA + S-adenosyl-L-methionine = a 2'-O-methylribonucleotide in U6 snRNA + S-adenosyl-L-homocysteine + H(+). Its function is as follows. S-adenosyl-L-methionine-dependent methyltransferase that has the ability to methylate both RNAs and proteins. Involved in pre-rRNA processing by catalyzing the site-specific 2'-hydroxyl methylation of ribose moieties in pre-ribosomal RNA. Site specificity is provided by a guide RNA that base pairs with the substrate. Methylation occurs at a characteristic distance from the sequence involved in base pairing with the guide RNA. Probably catalyzes 2'-O-methylation of U6 snRNAs in box C/D RNP complexes. U6 snRNA 2'-O-methylation is required for mRNA splicing fidelity. Also acts as a protein methyltransferase by mediating methylation of 'Gln-105' of histone H2A (H2AQ104me), a modification that impairs binding of the FACT complex and is specifically present at 35S ribosomal DNA locus. Part of the small subunit (SSU) processome, first precursor of the small eukaryotic ribosomal subunit. During the assembly of the SSU processome in the nucleolus, many ribosome biogenesis factors, an RNA chaperone and ribosomal proteins associate with the nascent pre-rRNA and work in concert to generate RNA folding, modifications, rearrangements and cleavage as well as targeted degradation of pre-ribosomal RNA by the RNA exosome. The protein is rRNA 2'-O-methyltransferase fibrillarin of Mus musculus (Mouse).